The following is a 297-amino-acid chain: Formylmethanofuran--tetrahydromethanopterin formyltransferase (297 aa).

This sequence belongs to the FTR family. As to quaternary structure, homotetramer.

It localises to the cytoplasm. It catalyses the reaction N-formylmethanofuran + 5,6,7,8-tetrahydromethanopterin + H(+) = N(5)-formyl-5,6,7,8-tetrahydromethanopterin + methanofuran. It functions in the pathway one-carbon metabolism; methanogenesis from CO(2); 5,10-methenyl-5,6,7,8-tetrahydromethanopterin from CO(2): step 2/3. In terms of biological role, catalyzes the reversible transfer of a formyl group from formylmethanofuran (formyl-MFR) to tetrahydromethanopterin (H(4)MPT) to produce 5-formyl tetrahydromethanopterin (5-formyl-H(4)MPT) and methanofuran (MFR). This chain is Formylmethanofuran--tetrahydromethanopterin formyltransferase, found in Methanosarcina mazei (strain ATCC BAA-159 / DSM 3647 / Goe1 / Go1 / JCM 11833 / OCM 88) (Methanosarcina frisia).